A 326-amino-acid chain; its full sequence is Peroxidase 43 (326 aa).

The N-terminal stretch at 1–24 is a signal peptide; that stretch reads MVWANAKMRLALSLVTVFFGISLA. Intrachain disulfides connect Cys35–Cys112, Cys68–Cys73, Cys118–Cys322, and Cys196–Cys228. The active-site Proton acceptor is His66. Ca(2+)-binding residues include Asp67, Val70, Gly72, Asp74, and Ser76. Asn151 carries N-linked (GlcNAc...) asparagine glycosylation. Residue Pro159 coordinates substrate. His189 lines the heme b pocket. A Ca(2+)-binding site is contributed by Thr190. Ca(2+) contacts are provided by Asp241, Ser244, and Asp249.

The protein belongs to the peroxidase family. Classical plant (class III) peroxidase subfamily. Requires heme b as cofactor. It depends on Ca(2+) as a cofactor.

It is found in the secreted. The enzyme catalyses 2 a phenolic donor + H2O2 = 2 a phenolic radical donor + 2 H2O. Functionally, removal of H(2)O(2), oxidation of toxic reductants, biosynthesis and degradation of lignin, suberization, auxin catabolism, response to environmental stresses such as wounding, pathogen attack and oxidative stress. These functions might be dependent on each isozyme/isoform in each plant tissue. This Arabidopsis thaliana (Mouse-ear cress) protein is Peroxidase 43 (PER43).